Here is a 276-residue protein sequence, read N- to C-terminus: S-adenosylmethionine-dependent nucleotide dehydratase (276 aa).

The Radical SAM core domain occupies 6–216 (TSVRKFRSAN…RRRHEDIGCI (211 aa)). [4Fe-4S] cluster-binding residues include Cys-22, Cys-26, and Cys-29.

It belongs to the radical SAM superfamily. Viperin family. It depends on [4Fe-4S] cluster as a cofactor.

The enzyme catalyses CTP + AH2 + S-adenosyl-L-methionine = 3'-deoxy-3',4'-didehydro-CTP + 5'-deoxyadenosine + L-methionine + A + H2O + H(+). Functionally, expression of pVip50 in E.coli (strain MG1655) confers resistance to phage P1; has no effect against T7. Catalyzes the conversion of cytosine triphosphate (CTP) to 3'-deoxy-3',4'-didehydro-CTP (ddhCTP), probably via a SAM-dependent radical mechanism. The modified nucleotide represses transcription from T7 RNA polymerase-directed genes (possibly by acting as chain terminators), strongly suggesting these nucleotides block viral polymerase transcription. How this protein allows bacteria to resist viruses that do not encode their own RNA polymerase (such as lambda, P1) is unknown. In Thermoplasmatales archaeon (strain ISO4-H5), this protein is S-adenosylmethionine-dependent nucleotide dehydratase.